We begin with the raw amino-acid sequence, 205 residues long: MTTDFLFPKIADCSYVSCYCEENVWKLCEQVKRTRPEELGTCYAVFVSNEGRTVPLWRQKAGRGDDQVVIWDYHVFFMHNPSPNRCLVFDLDTTLPFPTYFHKYVTETFRSDLALRPEHHRFFRVIPADTYLIEFSSDRRHMRRPDGSWIKPPPSYPPILSNTNMHCLGDFICMSAGKGPGAVYSLSEFVHNFYKSPNMVAQHNK.

Catalysis depends on residues Cys20, His74, and Asp90.

The protein belongs to the NTAQ1 family. In terms of assembly, monomer.

It carries out the reaction N-terminal L-glutaminyl-[protein] + H2O = N-terminal L-glutamyl-[protein] + NH4(+). Mediates the side-chain deamidation of N-terminal glutamine residues to glutamate, an important step in N-end rule pathway of protein degradation. Conversion of the resulting N-terminal glutamine to glutamate renders the protein susceptible to arginylation, polyubiquitination and degradation as specified by the N-end rule. Does not act on substrates with internal or C-terminal glutamine and does not act on non-glutamine residues in any position. In Drosophila pseudoobscura pseudoobscura (Fruit fly), this protein is Protein N-terminal glutamine amidohydrolase (tun).